The primary structure comprises 210 residues: Orotate phosphoribosyltransferase (210 aa).

Residues Arg-94, Lys-98, His-100, and 120–128 (EDLISTGGS) contribute to the 5-phospho-alpha-D-ribose 1-diphosphate site. Residue Ser-124 participates in orotate binding.

It belongs to the purine/pyrimidine phosphoribosyltransferase family. PyrE subfamily. As to quaternary structure, homodimer. It depends on Mg(2+) as a cofactor.

It catalyses the reaction orotidine 5'-phosphate + diphosphate = orotate + 5-phospho-alpha-D-ribose 1-diphosphate. Its pathway is pyrimidine metabolism; UMP biosynthesis via de novo pathway; UMP from orotate: step 1/2. Functionally, catalyzes the transfer of a ribosyl phosphate group from 5-phosphoribose 1-diphosphate to orotate, leading to the formation of orotidine monophosphate (OMP). The polypeptide is Orotate phosphoribosyltransferase (Bacillus cytotoxicus (strain DSM 22905 / CIP 110041 / 391-98 / NVH 391-98)).